Reading from the N-terminus, the 229-residue chain is MLSLIVLLEKETLRFSQMVLAWGNGRVGASGGIGIHFPNGELQDISLEFDKGCCTNQRTELYAILYAIQYIDDNFDLNKCKVMIKTDSTYSVNSITKWAEGHSRNDWCKRTGEPIANREFIQEIYEYYQNFNIDFEWVEAHTGQTDSESIANAQADFLANSAAKRAARDKKICRPSSSGSKRNSREFYCEKSSKQVYNTPYRSKSRASINGFPIDDDFEIELVKRRSDN.

The 123-residue stretch at 42–164 (LQDISLEFDK…ADFLANSAAK (123 aa)) folds into the RNase H type-1 domain. 3 residues coordinate a divalent metal cation: glutamate 60, aspartate 87, and aspartate 156.

The protein belongs to the RNase H family. The cofactor is a divalent metal cation.

The catalysed reaction is Endonucleolytic cleavage to 5'-phosphomonoester.. Endonuclease that specifically degrades the RNA of RNA-DNA hybrids. The sequence is that of Probable ribonuclease H (RNH1) from Acanthamoeba polyphaga mimivirus (APMV).